Reading from the N-terminus, the 300-residue chain is Diaminopimelate epimerase (300 aa).

Substrate is bound by residues Asn15, Gln47, and Asn67. Cys76 (proton donor) is an active-site residue. Substrate is bound by residues 77–78 (GN), Asn163, Asn197, and 215–216 (ER). Catalysis depends on Cys224, which acts as the Proton acceptor. 225 to 226 (GS) lines the substrate pocket. The segment at 275–300 (SGTFDPATGEWSRDAQNDKPTDRGAA) is disordered. The segment covering 285–300 (WSRDAQNDKPTDRGAA) has biased composition (basic and acidic residues).

Belongs to the diaminopimelate epimerase family. In terms of assembly, homodimer.

It is found in the cytoplasm. The catalysed reaction is (2S,6S)-2,6-diaminopimelate = meso-2,6-diaminopimelate. The protein operates within amino-acid biosynthesis; L-lysine biosynthesis via DAP pathway; DL-2,6-diaminopimelate from LL-2,6-diaminopimelate: step 1/1. Its function is as follows. Catalyzes the stereoinversion of LL-2,6-diaminopimelate (L,L-DAP) to meso-diaminopimelate (meso-DAP), a precursor of L-lysine and an essential component of the bacterial peptidoglycan. This is Diaminopimelate epimerase from Brucella anthropi (strain ATCC 49188 / DSM 6882 / CCUG 24695 / JCM 21032 / LMG 3331 / NBRC 15819 / NCTC 12168 / Alc 37) (Ochrobactrum anthropi).